The sequence spans 215 residues: Pyrrolidone-carboxylate peptidase (215 aa).

Catalysis depends on residues E81, C144, and H168.

The protein belongs to the peptidase C15 family. In terms of assembly, homotetramer.

It localises to the cytoplasm. The enzyme catalyses Release of an N-terminal pyroglutamyl group from a polypeptide, the second amino acid generally not being Pro.. In terms of biological role, removes 5-oxoproline from various penultimate amino acid residues except L-proline. This Bacillus amyloliquefaciens (Bacillus velezensis) protein is Pyrrolidone-carboxylate peptidase (pcp).